A 271-amino-acid chain; its full sequence is ATP synthase subunit a (271 aa).

5 consecutive transmembrane segments (helical) span residues 40–60, 100–120, 146–166, 220–240, and 242–262; these read TINIDSMFFSVVLGLLFLVLF, LIAPLALTIFVWVFLMNLMDL, DVNVTLSMALGVFILILFYNI, LIFILIAGLLPWWSQWILNVP, and AIFHILIITLQAFIFMVLTIV.

This sequence belongs to the ATPase A chain family. F-type ATPases have 2 components, CF(1) - the catalytic core - and CF(0) - the membrane proton channel. CF(1) has five subunits: alpha(3), beta(3), gamma(1), delta(1), epsilon(1). CF(0) has three main subunits: a(1), b(2) and c(9-12). The alpha and beta chains form an alternating ring which encloses part of the gamma chain. CF(1) is attached to CF(0) by a central stalk formed by the gamma and epsilon chains, while a peripheral stalk is formed by the delta and b chains.

Its subcellular location is the cell inner membrane. Its function is as follows. Key component of the proton channel; it plays a direct role in the translocation of protons across the membrane. The chain is ATP synthase subunit a from Shigella flexneri.